Consider the following 121-residue polypeptide: ATP synthase epsilon chain (121 aa).

The protein belongs to the ATPase epsilon chain family. As to quaternary structure, F-type ATPases have 2 components, CF(1) - the catalytic core - and CF(0) - the membrane proton channel. CF(1) has five subunits: alpha(3), beta(3), gamma(1), delta(1), epsilon(1). CF(0) has three main subunits: a, b and c.

Its subcellular location is the cell membrane. In terms of biological role, produces ATP from ADP in the presence of a proton gradient across the membrane. In Mycobacterium bovis (strain ATCC BAA-935 / AF2122/97), this protein is ATP synthase epsilon chain (atpC).